Consider the following 236-residue polypeptide: Small ribosomal subunit protein uS3 (236 aa).

Residues 39–107 enclose the KH type-2 domain; the sequence is IREFLTEELK…DTSLNIVEVR (69 aa). Residues 214-236 are disordered; that stretch reads ASERRAVEGDNQGSSSNRRRENA.

It belongs to the universal ribosomal protein uS3 family. In terms of assembly, part of the 30S ribosomal subunit. Forms a tight complex with proteins S10 and S14.

In terms of biological role, binds the lower part of the 30S subunit head. Binds mRNA in the 70S ribosome, positioning it for translation. This is Small ribosomal subunit protein uS3 from Brucella suis (strain ATCC 23445 / NCTC 10510).